The sequence spans 266 residues: tRNA pseudouridine synthase A (266 aa).

The active-site Nucleophile is aspartate 52. Tyrosine 113 provides a ligand contact to substrate.

This sequence belongs to the tRNA pseudouridine synthase TruA family. As to quaternary structure, homodimer.

The enzyme catalyses uridine(38/39/40) in tRNA = pseudouridine(38/39/40) in tRNA. Functionally, formation of pseudouridine at positions 38, 39 and 40 in the anticodon stem and loop of transfer RNAs. This chain is tRNA pseudouridine synthase A, found in Agrobacterium fabrum (strain C58 / ATCC 33970) (Agrobacterium tumefaciens (strain C58)).